The chain runs to 316 residues: Cuticle collagen 7 (316 aa).

An N-terminal signal peptide occupies residues 1 to 34 (MSSATFLSVMAGLSGIVVFGALISVFHIYSDINS). Disordered regions lie at residues 78-269 (KQSQ…DAAY) and 281-316 (HRNV…HVQA). The span at 79–90 (QSQCNCGQQASN) shows a compositional bias: polar residues. Triple-helical region regions lie at residues 94–126 (GPPG…AGPS), 139–198 (GLPG…PGKS), and 204–263 (GLPG…DGTP). 3 stretches are compositionally biased toward low complexity: residues 110–125 (QPGQ…VAGP), 137–147 (PQGLPGPAGVP), and 177–198 (AGSA…PGKS). The span at 209 to 221 (SGAPGPQGPPGAP) shows a compositional bias: pro residues. Positions 241–260 (PNGQPGHPGQDGQPGAPGND) are enriched in low complexity.

Belongs to the cuticular collagen family. As to quaternary structure, collagen polypeptide chains are complexed within the cuticle by disulfide bonds and other types of covalent cross-links.

Nematode cuticles are composed largely of collagen-like proteins. The cuticle functions both as an exoskeleton and as a barrier to protect the worm from its environment. The protein is Cuticle collagen 7 (col-7) of Caenorhabditis elegans.